The following is a 199-amino-acid chain: Probable GTP-binding protein EngB (199 aa).

The 172-residue stretch at 28–199 (DLPEIALAGR…DSWDAILEQV (172 aa)) folds into the EngB-type G domain. GTP contacts are provided by residues 36–43 (GRSNVGKS), 63–67 (GKTQL), 81–84 (DVPG), 148–151 (TKAD), and 180–182 (FSS). Mg(2+) is bound by residues S43 and T65.

It belongs to the TRAFAC class TrmE-Era-EngA-EngB-Septin-like GTPase superfamily. EngB GTPase family. It depends on Mg(2+) as a cofactor.

Necessary for normal cell division and for the maintenance of normal septation. This chain is Probable GTP-binding protein EngB, found in Streptococcus pyogenes serotype M1.